The chain runs to 229 residues: MENNHHLAKDSLDELNPKRGKGEHETQVSQYTVVEEATIPQSLVKTSRSADHKVMEASKVADTRTAWSTKIPAVLLPVFVINIALFKYLVFANFSTKDRVLFGLGNGGINIFSMWLLLATYETWFRSIKEVIVACGAGIRSFPQKRGVNMLYAILKLTFVNAFAIPLLMFFRSHFEQWRLGCPLVERVIGVMLNVAYFIIEIENPGLFTRVFNKYCDCLFAIRDILNRN.

The segment covering 1 to 26 has biased composition (basic and acidic residues); it reads MENNHHLAKDSLDELNPKRGKGEHET. The tract at residues 1–27 is disordered; the sequence is MENNHHLAKDSLDELNPKRGKGEHETQ. The next 4 helical transmembrane spans lie at 71-91, 100-120, 151-171, and 188-208; these read IPAV…YLVF, VLFG…LLAT, LYAI…LMFF, and VIGV…PGLF.

The protein belongs to the WTF family.

It localises to the endoplasmic reticulum membrane. In terms of biological role, may act in meiotic drive. The protein is Wtf element wtf14 of Schizosaccharomyces kambucha (Fission yeast).